We begin with the raw amino-acid sequence, 241 residues long: ATP synthase subunit a (241 aa).

Transmembrane regions (helical) follow at residues 30-50, 91-111, 128-148, 193-213, and 214-234; these read GQVF…VVVG, FIGT…LVPW, INTT…AGLS, LVVA…VMFL, and GLFT…YYIG.

Belongs to the ATPase A chain family. As to quaternary structure, F-type ATPases have 2 components, CF(1) - the catalytic core - and CF(0) - the membrane proton channel. CF(1) has five subunits: alpha(3), beta(3), gamma(1), delta(1), epsilon(1). CF(0) has four main subunits: a, b, b' and c.

The protein localises to the cellular thylakoid membrane. Its function is as follows. Key component of the proton channel; it plays a direct role in the translocation of protons across the membrane. The polypeptide is ATP synthase subunit a (Prochlorococcus marinus (strain MIT 9211)).